The primary structure comprises 255 residues: Short chain dehydrogenase adrF (255 aa).

I11, R118, Y150, K154, and V183 together coordinate NADP(+). The Proton acceptor role is filled by Y150. K154 acts as the Lowers pKa of active site Tyr in catalysis.

Belongs to the short-chain dehydrogenases/reductases (SDR) family.

The protein operates within secondary metabolite biosynthesis; terpenoid biosynthesis. In terms of biological role, short chain dehydrogenase; part of the gene cluster that mediates the biosynthesis of andrastins, meroterpenoid compounds that exhibit inhibitory activity against ras farnesyltransferase, suggesting that they could be promising leads for antitumor agents. The first step of the pathway is the synthesis of 3,5-dimethylorsellinic acid (DMOA) by the polyketide synthase adrD via condensation of one acetyl-CoA starter unit with 3 malonyl-CoA units and 2 methylations. DMAO is then converted to farnesyl-DMAO by the prenyltransferase adrG. The methyltransferase adrK catalyzes the methylation of the carboxyl group of farnesyl-DMAO to farnesyl-DMAO methyl ester which is further converted to epoxyfarnesyl-DMAO methyl ester by the FAD-dependent monooxygenase adrH. The terpene cyclase adrI then catalyzes the carbon skeletal rearrangement to generate the andrastin E, the first compound in the pathway having the andrastin scaffold, with the tetracyclic ring system. The post-cyclization tailoring enzymes adrF, adrE, adrJ, and adrA, are involved in the conversion of andrastin E into andrastin A. The short chain dehydrogenase adrF is responsible for the oxidation of the C-3 a hydroxyl group of andrastin E to yield the corresponding ketone, andrastin D. The ketoreductase adrE stereoselectively reduces the carbonyl moiety to reverse the stereochemistry of the C-3 position to yield andrastin F. The acetyltransferase adrJ is the acetyltransferase that attaches the acetyl group to the C-3 hydroxyl group of andrastin F to yield andrastin C. Finally, the cytochrome P450 monooxygenase adrA catalyzes two sequential oxidation reactions of the C-23 methyl group, to generate the corresponding alcohol andrastin B, and aldehyde andrastin A. This is Short chain dehydrogenase adrF from Penicillium rubens (strain ATCC 28089 / DSM 1075 / NRRL 1951 / Wisconsin 54-1255) (Penicillium chrysogenum).